The following is a 448-amino-acid chain: Trigger factor (448 aa).

Residues 167-253 (GSIVRVDFVE…IKDIKKRDIP (87 aa)) form the PPIase FKBP-type domain.

It belongs to the FKBP-type PPIase family. Tig subfamily.

The protein localises to the cytoplasm. The catalysed reaction is [protein]-peptidylproline (omega=180) = [protein]-peptidylproline (omega=0). In terms of biological role, involved in protein export. Acts as a chaperone by maintaining the newly synthesized protein in an open conformation. Functions as a peptidyl-prolyl cis-trans isomerase. This Borrelia hermsii (strain HS1 / DAH) protein is Trigger factor.